We begin with the raw amino-acid sequence, 596 residues long: Transcription factor COE3 (596 aa).

The interval 1-22 (MFGIQENIPRGGTTMKEEPLGS) is disordered. The segment at 63–66 (RKSN) is interaction with DNA. The segment at 151 to 170 (CRVLLTHEIMCSRCCDKKSC) adopts a C5-type zinc-finger fold. Interaction with DNA stretches follow at residues 197–204 (NCLKNAGN) and 236–239 (NNSK). The 84-residue stretch at 263–346 (PCIKAISPSE…KGAPGRFVYT (84 aa)) folds into the IPT/TIG domain. A disordered region spans residues 451–483 (TSQANDQVGYSRNTSSVSPRGYVPSSTPQQSNY).

This sequence belongs to the COE family. In terms of assembly, forms either a homodimer or a heterodimer with a related family member. In terms of tissue distribution, expressed in brain.

The protein localises to the nucleus. Its function is as follows. Transcriptional activator. Recognizes variations of the palindromic sequence 5'-ATTCCCNNGGGAATT-3'. This chain is Transcription factor COE3 (EBF3), found in Homo sapiens (Human).